We begin with the raw amino-acid sequence, 283 residues long: MIIDKLYENVEKKGCVCVGLDTDISYLPKGFLNKFTNIEDAIFAFNQRIVDSTFDVSACYKVQIAYYEAMGIKGMILYKKTLEYIRKKGGIVIADIKRGDISATAKMYAKAHFEGDFESDFITLNPYMGMDTLEPYKDYFKNKEKGVFLLLRTSNEGSKDIQYLDLKDNKKVYNKVGEKIENIGKEFLGNCGYSSIGAVVGCTAEENNIRKELKHTFFLIPGYGAQGGKAEVAKSYLSEGNGGIVNSSRGILLAYKKYDEEGKNFEECARNEVINMKKTLQII.

Lys97 (proton donor) is an active-site residue.

This sequence belongs to the OMP decarboxylase family. Type 2 subfamily.

The enzyme catalyses orotidine 5'-phosphate + H(+) = UMP + CO2. Its pathway is pyrimidine metabolism; UMP biosynthesis via de novo pathway; UMP from orotate: step 2/2. In Clostridium botulinum (strain Okra / Type B1), this protein is Orotidine 5'-phosphate decarboxylase.